A 427-amino-acid polypeptide reads, in one-letter code: Adenylosuccinate synthetase (427 aa).

Residues 12–18 (GDEGKGK) and 40–42 (GHT) contribute to the GTP site. Asp-13 functions as the Proton acceptor in the catalytic mechanism. The Mg(2+) site is built by Asp-13 and Gly-40. Residues 13 to 16 (DEGK), 38 to 41 (NAGH), Thr-128, Arg-142, Gln-223, Thr-238, and Arg-302 contribute to the IMP site. His-41 acts as the Proton donor in catalysis. A substrate-binding site is contributed by 298–304 (TTTGRPR). GTP contacts are provided by residues Arg-304, 330–332 (SID), and 412–414 (SVG).

The protein belongs to the adenylosuccinate synthetase family. Homodimer. Mg(2+) is required as a cofactor.

The protein localises to the cytoplasm. It carries out the reaction IMP + L-aspartate + GTP = N(6)-(1,2-dicarboxyethyl)-AMP + GDP + phosphate + 2 H(+). Its pathway is purine metabolism; AMP biosynthesis via de novo pathway; AMP from IMP: step 1/2. Plays an important role in the de novo pathway of purine nucleotide biosynthesis. Catalyzes the first committed step in the biosynthesis of AMP from IMP. The polypeptide is Adenylosuccinate synthetase (Staphylococcus aureus (strain N315)).